The following is a 697-amino-acid chain: MSRRSDLSDKDSQSRKRHWLTDQAVTNEEKEQSPTKRTRKTKSQGLGGLFNTFFGMFVSSNSGEKEKTEVSGEVQVQEDDEIIVEGTTRRVAENKKYMIFLNEDAPVRANAGSEENEVIIEKHVQKNVEIRNDEEKQEVQGDLVLTLSSSPKSPKNLEKSFEVQQDDEEPDVLFEKVVKTPNKQLQEARRFQNELIFLNDNPDTPDDVSVISDSRSKEFISPTPDDSVSRPITPSLSSLSNYTSNNVRDYWRRNSAKKPEVLRRVPVRHQFKHSTSVRKMNTIIDLKKIKNHLSSRDRLLQGVVASGQYEAKAISGIVEKKPKKMQRTSSTDILARAKNKIAELGGSRSNTPSLLSREPSIIIDSEESTSSSYRQHARSNSSESDSYRKLNDILSQINSLGIGSAYRGPQRYQNSYQLSKQKEDKLLEEARIREGHRSQTRGDRLEDVRKRLELQGIAIRPKVEKKKVDDFMALPDAADALVERAWSGGNPNEQFVDAFSIQICKKDLATLSGLHWLNDEIINFYLQLICDRSNGDSKYPKIYAFNTFFYSNIVSKGYASVKRWTRKVDIFAFDIVLVPVHLGMHWCMAVIDMGEKKIEFYDSLYDGNTAVLPALRGYLEAESLDKKKTAMNFSGWTIQQMTDIPRQQNGSDCGVFSCQFGEWASRRTTPRFTQKNMPYYRKRMVYEIVSKKLLATI.

A compositionally biased stretch (basic and acidic residues) spans 1-14 (MSRRSDLSDKDSQS). 2 disordered regions span residues 1–47 (MSRR…QGLG) and 365–387 (SEESTSSSYRQHARSNSSESDSY). The Nuclear localization signal signature appears at 15–19 (RKRHW). The Nuclear localization signal signature appears at 462–467 (KVEKKK). Residues 501–664 (IQICKKDLAT…VFSCQFGEWA (164 aa)) form a protease region. Active-site residues include histidine 585, aspartate 602, and cysteine 653.

Belongs to the peptidase C48 family.

It localises to the nucleus envelope. Functionally, protease that deconjugates smo-1 from targeted proteins and may catalyze the processing of smo-1 to its mature form. This is Sentrin-specific protease (ulp-1) from Caenorhabditis elegans.